The primary structure comprises 249 residues: MAGHSKFKNIQHRKGAQDKKKAKLFASLIREISLSAKSGTDIQYNHRLRAAISAAKFNNLPKDRIEKAIAQANNKDNYENYFEITYEGIIFDGIAIIVEALTDNTNRTAANVRAIFSKYGGNLVGTGNASFLFDRLGIIKFESKASTSEKLFDAAIEIGAEDIELDEEYNVVYTPIKLFTNIIEELAQLFGYPVESYIGWRPRNTVLISDTEKAQKLIKLVNALDDDDDVQRFFGNYEFSEQIYNNSLT.

The protein belongs to the TACO1 family.

The protein resides in the cytoplasm. The sequence is that of Probable transcriptional regulatory protein OTBS_0251 from Orientia tsutsugamushi (strain Boryong) (Rickettsia tsutsugamushi).